The following is a 76-amino-acid chain: Omega-conotoxin-like TxO1 (76 aa).

An N-terminal signal peptide occupies residues 1–22 (MKLTCVVIVAVLFLTVWTFATA). Positions 23-50 (DDSGNGLEKLFSNAHHEMKNPEASKLNE) are excised as a propeptide. 3 disulfide bridges follow: Cys-52–Cys-67, Cys-59–Cys-70, and Cys-66–Cys-75.

It belongs to the conotoxin O1 superfamily. In terms of tissue distribution, expressed by the venom duct.

It is found in the secreted. Functionally, omega-conotoxins act at presynaptic membranes, they bind and block voltage-gated calcium channels (Cav). The chain is Omega-conotoxin-like TxO1 from Conus textile (Cloth-of-gold cone).